The primary structure comprises 381 residues: Short-chain dehydrogenase anuD (381 aa).

Residues isoleucine 84, lysine 109, aspartate 133, asparagine 158, tyrosine 244, and lysine 248 each contribute to the NADP(+) site. Tyrosine 244 (proton acceptor) is an active-site residue. Tyrosine 244 serves as the catalytic Proton donor. Lysine 248 acts as the Lowers pKa of active site Tyr in catalysis.

Belongs to the short-chain dehydrogenases/reductases (SDR) family.

Functionally, highly reducing polyketide synthase; part of the gene cluster that mediates the biosynthesis of annullatin D, an alkylated aromatic polyketide with a fused dihydrobenzofuran lactone ring system that exhibits potent agonistic activities toward the cannabinoid receptors. AnuD does not seem to play a role within the pathway. The annullatin backbone 2-hydroxymethyl-3-pentylphenol is assembled from one acetyl-CoA starter unit and 5 malonyl-CoA elongation units by cooperation of the highly reducing polyketide synthase anuA, the short-chain dehydrogenase anuB and the oxidoreductase anuC, before being hydroxylated at the C-5 alkyl chain by the cytochrome P450 monooxygenase anuE to form (8S)-annullatin E. The prenyltransferase anuH subsequently installs one isoprenyl group at the benzene ring to form (8S)-annullatin J. Enzymatic or nonenzymatic dihydro-benzofuran ring formation between the prenyl and the phenolic hydroxyl groups in (8S)-annullatin J results in two diastereomers (2S,9S)-annullatin H and compound 12. The intermediate (2S,9S)-annullatin H is then converted to (2S,9S)-annullatin D by the FAD-linked oxidoreductase anuG-catalyzed five-member lactone ring formation. The isomer 12 acts as a substrate for the short-chain dehydrogenase anuF and is oxidized to (2R)-annullatin F, which is subsequently acetylated by an acetyltransferase leading to (2R)-annullatin G formation. The remaining enzymes identified within the cluster, anuD, anuI and anuJ, seem not to be involved in annullatin biosynthesis. In Penicillium roqueforti (strain FM164), this protein is Short-chain dehydrogenase anuD.